A 185-amino-acid polypeptide reads, in one-letter code: Serine/arginine-rich splicing factor RSZ21 (185 aa).

The 72-residue stretch at 2–73 (ARLYVGNLDP…WRVELSRNSS (72 aa)) folds into the RRM domain. Residues 86 to 103 (MKCYECGETGHFARECRL) form a CCHC-type zinc finger. The interval 104-185 (RIGPGGLGSG…DGGRYRRSRS (82 aa)) is disordered. A compositionally biased stretch (basic residues) spans 113 to 123 (GKRRSRSRSRS). 2 stretches are compositionally biased toward low complexity: residues 124–138 (RSPQ…GRRS) and 151–162 (VSPVRGRSYSRS).

The protein belongs to the splicing factor SR family. Post-translationally, extensively phosphorylated on serine residues in the RS domain. Expressed in roots, leaves and immature seeds.

It localises to the nucleus. Involved in pre-mRNA splicing. The sequence is that of Serine/arginine-rich splicing factor RSZ21 (RSZP21) from Oryza sativa subsp. japonica (Rice).